The sequence spans 89 residues: RNA-binding protein Hfq (89 aa).

One can recognise a Sm domain in the interval 9 to 68; that stretch reads EPFLNALRKEKVPVSIYLVNGIKLQGQIESFDQFVILLRNNVNQMVYKHAISTVVPARNV. Residues 70–89 are disordered; that stretch reads TAPPVPTETHAQSSEEFGNI. The segment covering 78-89 has biased composition (polar residues); the sequence is THAQSSEEFGNI.

Belongs to the Hfq family. In terms of assembly, homohexamer.

RNA chaperone that binds small regulatory RNA (sRNAs) and mRNAs to facilitate mRNA translational regulation in response to envelope stress, environmental stress and changes in metabolite concentrations. Also binds with high specificity to tRNAs. The polypeptide is RNA-binding protein Hfq (Alkalilimnicola ehrlichii (strain ATCC BAA-1101 / DSM 17681 / MLHE-1)).